Reading from the N-terminus, the 651-residue chain is Epithelial sodium channel subunit beta (651 aa).

The Cytoplasmic portion of the chain corresponds to Met1 to Thr50. A helical membrane pass occupies residues Leu51–Ile71. Residues Gln72–Gly541 are Extracellular-facing. Intrachain disulfides connect Cys98–Cys281, Cys205–Cys212, Cys258–Cys265, Cys370–Cys457, Cys395–Cys453, Cys399–Cys449, Cys408–Cys435, and Cys410–Cys424. The helical transmembrane segment at Ser542 to Ile562 threads the bilayer. At Arg563–Leu651 the chain is on the cytoplasmic side. The interval Gln612–Leu651 is disordered. The segment covering Asp633–Leu651 has biased composition (basic and acidic residues).

Belongs to the amiloride-sensitive sodium channel (TC 1.A.6) family. SCNN1B subfamily. In terms of assembly, component of the heterotrimeric epithelial sodium channel (ENaC) composed of an alpha/SCNN1A, a beta/SCNN1B and a gamma/SCNN1G subunit. As to expression, strongly expressed in gill, kidney and rectum and more weakly in brain, eye, liver and muscle.

It is found in the apical cell membrane. It localises to the cytoplasmic vesicle membrane. The enzyme catalyses Na(+)(in) = Na(+)(out). Originally identified and characterized by its inhibition by the diuretic drug amiloride. Its function is as follows. This is one of the three pore-forming subunits of the heterotrimeric epithelial sodium channel (ENaC), a critical regulator of sodium balance and fluid homeostasis. ENaC operates in epithelial tissues, where it mediates the electrodiffusion of sodium ions from extracellular fluid through the apical membrane of cells, with water following osmotically. The polypeptide is Epithelial sodium channel subunit beta (Neoceratodus forsteri (Australian lungfish)).